The sequence spans 568 residues: Tyrosine-protein kinase transforming protein Src (568 aa).

The segment at 1-58 is disordered; it reads MGSSKSKPKDPSQRRRSLEPPDSTHHGGFPASQTPNKTAAPDTHRTPSRSFGTVATEP. Residue G2 is the site of N-myristoyl glycine; by host attachment. Positions 7 to 25 are enriched in basic and acidic residues; it reads KPKDPSQRRRSLEPPDSTH. Residues 81–142 enclose the SH3 domain; it reads GGVTTFVALY…PSNYVAPSDS (62 aa). Residues 148-245 form the SH2 domain; that stretch reads WYFGKITRRE…GLCHRLTNVC (98 aa). Positions 267 to 520 constitute a Protein kinase domain; the sequence is LRLEVKLGQG…YLQAFLEDYF (254 aa). Residues 273–281 and K295 contribute to the ATP site; that span reads LGQGCFGEV. Residue D386 is the Proton acceptor of the active site. Y416 is subject to Phosphotyrosine; by autocatalysis.

This sequence belongs to the protein kinase superfamily. Tyr protein kinase family. SRC subfamily. The phosphorylated form is termed pp60v-src.

The enzyme catalyses L-tyrosyl-[protein] + ATP = O-phospho-L-tyrosyl-[protein] + ADP + H(+). This phosphoprotein, required for both the initiation and the maintenance of neoplastic transformation, is a protein kinase that catalyzes the phosphorylation of tyrosine residues in vitro. The protein is Tyrosine-protein kinase transforming protein Src (V-SRC) of Galliformes.